A 362-amino-acid chain; its full sequence is Fructose-bisphosphate aldolase (362 aa).

Residue Asp-33 participates in dihydroxyacetone phosphate binding. Ser-35 and Thr-38 together coordinate D-glyceraldehyde 3-phosphate. Residue Arg-42 coordinates beta-D-fructose 1,6-bisphosphate. Lys-106 provides a ligand contact to D-glyceraldehyde 3-phosphate. Lys-145 is a binding site for dihydroxyacetone phosphate. Residue Glu-188 participates in D-glyceraldehyde 3-phosphate binding. Catalysis depends on Glu-188, which acts as the Proton acceptor. Dihydroxyacetone phosphate contacts are provided by Lys-230, Ser-272, and Gly-273. Lys-230 functions as the Schiff-base intermediate with dihydroxyacetone phosphate in the catalytic mechanism. Residues 272 to 274 (SGG) and Ser-300 contribute to the beta-D-fructose 1,6-bisphosphate site. Gly-302 and Arg-303 together coordinate dihydroxyacetone phosphate. Arg-303 is a binding site for beta-D-fructose 1,6-bisphosphate.

It belongs to the class I fructose-bisphosphate aldolase family. Homotetramer. Interacts with TRAP (via cytoplasmic domain); the interaction prevents substrate binding and thereby inhibits aldolase activity. Interacts with MTRAP (via cytoplasmic domain); MTRAP phosphorylation may increase the binding to FBPA. Interact with RH1 (via cytoplasmic domain). Interacts with RH2b (via cytoplasmic domain). Interacts with RH4 (via cytoplasmic domain). Interacts with AMA1 (via cytoplasmic domain); the interaction is weak, however it may be increased upon AMA1 phosphorylation. Interacts with EBA140 (via cytoplasmic domain); the interaction is weak. Interacts with EBA175 (via cytoplasmic domain); the interaction is weak. Interacts with EBA181 (via cytoplasmic domain); the interaction is weak. Interacts with G-actin and F-actin. May interact with ACT2/actin II; the interaction inhibits FBPA catalytic activity. Interacts with human SLC4A1/band 3 (via N-terminus); the interaction inhibits FBPA catalytic activity.

It localises to the cytoplasm. The protein resides in the membrane. The protein localises to the host cell membrane. The catalysed reaction is beta-D-fructose 1,6-bisphosphate = D-glyceraldehyde 3-phosphate + dihydroxyacetone phosphate. It functions in the pathway carbohydrate degradation; glycolysis; D-glyceraldehyde 3-phosphate and glycerone phosphate from D-glucose: step 4/4. With respect to regulation, the cytoplasmic tail of TRAP and probably other adhesins acts as a competitive inhibitor as the binding sites of the glycolytic substrate fructose 1,6-bisphosphate and TRAP partially overlap. Inhibited by suramin, an antiparasitic drug used to treat Trypanosome-mediated infection. Plays a key role in glycolysis by catalyzing the cleavage of fructose 1,6-bisphosphate into dihydroxyacetone phosphate and glyceraldehyde 3-phosphate. Independently of its catalytic activity, connects the actin filaments, and thus the actomyosin motor, to cell surface adhesins of the thrombospondin-related anonymous protein (TRAP), the erythrocyte binding ligand (EBL) and reticulocyte binding homolog (RH) protein families; this interaction is probably involved in transducing the motor force across the parasite surface required for sporozoite and ookinete gliding motility and merozoite invasion. Stimulates actin polymerisation. This chain is Fructose-bisphosphate aldolase, found in Plasmodium falciparum (isolate K1 / Thailand).